Here is a 313-residue protein sequence, read N- to C-terminus: Caffeic acid 3-O-methyltransferase (313 aa).

Position 112-118 (112-118 (IDQDRVF)) interacts with substrate. The segment at 144-162 (AFDYPGTDPRFNKIFNRAM) is substrate binding. Residues glycine 190, aspartate 213, aspartate 233, methionine 234, and lysine 247 each contribute to the S-adenosyl-L-methionine site. Histidine 251 serves as the catalytic Proton acceptor.

Belongs to the class I-like SAM-binding methyltransferase superfamily. Cation-independent O-methyltransferase family. COMT subfamily. As to quaternary structure, homodimer.

The catalysed reaction is (E)-caffeate + S-adenosyl-L-methionine = (E)-ferulate + S-adenosyl-L-homocysteine + H(+). Its pathway is aromatic compound metabolism; phenylpropanoid biosynthesis. Catalyzes the conversion of caffeic acid to ferulic acid and of 5-hydroxyferulic acid to sinapic acid. The resulting products may subsequently be converted to the corresponding alcohols that are incorporated into lignins. The chain is Caffeic acid 3-O-methyltransferase (COMT1) from Eucalyptus globulus (Tasmanian blue gum).